Here is a 599-residue protein sequence, read N- to C-terminus: MLSLRRSIWIAACKRVSSFRTTIPIKSLHTNSQPVLSLRNVKFRPYSTIPLLQSLVPTCNSCGITLQKTDPDRPGFYREPGTGQKLVRKENLVASNAYNGLDDDDLKLLLNSSGEEKDISLFKQRNEPSPKVAPQSIQCIRCREAQFRSEYSQDEFPIESLDAIMTSLPPDAKLVYVISAADFPMSLDSRVFSYRSALEILFVITKCDLLFPTLNLANKYGLPFFQDYFYRKHGVSGENVVLTSGKIDWNIPTLLKNGKIRDNSYLIGSVNSGKSTLLKSMLSVSNKLAAKKQHLSSRERVKLEKEQDRLINSGASTPSDIRALRRKNEQEKNRTGPGASYMPGYTRGTIPYDVDGITMHDVPGFGENVDSNEFASLFSYLQPSQMKQLSKGVPIHKYGTYKSPFETIKGGQCYTVGGIFYMVPPPGTMVQARNCINHKAHIFSNVDKAKASLEAVANEDENGAHAGLRNVFIMPGSALKKLVPRYIPAFYGAIDLVVAGAGHVNLTPTGAPTPTDEPWIVWVPQGVRIWVRQPITRYITRTLAGRDAKGNPLRKELWKQKSVTHVERYTGKTPFYTRLSANPDNTMATKDNRYPAWYE.

The transit peptide at 1–46 directs the protein to the mitochondrion; it reads MLSLRRSIWIAACKRVSSFRTTIPIKSLHTNSQPVLSLRNVKFRPY. The 211-residue stretch at 158–368 folds into the CP-type G domain; it reads IESLDAIMTS…MHDVPGFGEN (211 aa). The segment at 312 to 342 is disordered; it reads NSGASTPSDIRALRRKNEQEKNRTGPGASYM. Residues 322 to 334 show a composition bias toward basic and acidic residues; the sequence is RALRRKNEQEKNR.

This sequence belongs to the TRAFAC class YlqF/YawG GTPase family. GEP3 subfamily.

Its subcellular location is the mitochondrion. In terms of biological role, may be involved in the mitochondrial lipid metabolism. This Meyerozyma guilliermondii (strain ATCC 6260 / CBS 566 / DSM 6381 / JCM 1539 / NBRC 10279 / NRRL Y-324) (Yeast) protein is Genetic interactor of prohibitins 3, mitochondrial (GEP3).